Reading from the N-terminus, the 190-residue chain is Segregation and condensation protein B (190 aa).

It belongs to the ScpB family. As to quaternary structure, homodimer. Homodimerization may be required to stabilize the binding of ScpA to the Smc head domains. Component of a cohesin-like complex composed of ScpA, ScpB and the Smc homodimer, in which ScpA and ScpB bind to the head domain of Smc. The presence of the three proteins is required for the association of the complex with DNA.

The protein resides in the cytoplasm. In terms of biological role, participates in chromosomal partition during cell division. May act via the formation of a condensin-like complex containing Smc and ScpA that pull DNA away from mid-cell into both cell halves. In Bacillus cereus (strain B4264), this protein is Segregation and condensation protein B.